A 455-amino-acid chain; its full sequence is Major facilitator superfamily domain-containing protein 10 (455 aa).

The next 11 helical transmembrane spans lie at 27–47, 86–106, 113–135, 148–168, 176–196, 202–222, 275–295, 310–327, 336–356, 359–379, and 421–441; these read VVFL…PLLP, VLFG…CAPL, CLGR…AVWA, LIGG…ADLG, GMAV…MLGA, MAPW…FCFL, LGLV…TLSF, KMFF…GAYA, VAAV…IGWG, LPVL…VVPC, and LAGA…PFFL.

The protein belongs to the major facilitator superfamily. Expressed in luminal membrane of renal tubules (at protein level). Detected in all tissues tested with higher expression in heart, splee, kidney, leukocytes and prostate.

It is found in the nucleus inner membrane. It localises to the cell membrane. Probable organic anion transporter which may serve as a transporter for some non-steroidal anti-inflammatory drugs (NSAIDs) as well as other organic anions across the luminal membranes of renal proximal tubules at the final excretion step into the urine. The chain is Major facilitator superfamily domain-containing protein 10 (MFSD10) from Homo sapiens (Human).